The following is a 282-amino-acid chain: Bifunctional protein FolD (282 aa).

Residues 166-168 (GAS) and I232 contribute to the NADP(+) site.

The protein belongs to the tetrahydrofolate dehydrogenase/cyclohydrolase family. As to quaternary structure, homodimer.

It carries out the reaction (6R)-5,10-methylene-5,6,7,8-tetrahydrofolate + NADP(+) = (6R)-5,10-methenyltetrahydrofolate + NADPH. The enzyme catalyses (6R)-5,10-methenyltetrahydrofolate + H2O = (6R)-10-formyltetrahydrofolate + H(+). The protein operates within one-carbon metabolism; tetrahydrofolate interconversion. Catalyzes the oxidation of 5,10-methylenetetrahydrofolate to 5,10-methenyltetrahydrofolate and then the hydrolysis of 5,10-methenyltetrahydrofolate to 10-formyltetrahydrofolate. This Histophilus somni (strain 129Pt) (Haemophilus somnus) protein is Bifunctional protein FolD.